The chain runs to 51 residues: Photosystem I reaction center subunit IX (51 aa).

A helical transmembrane segment spans residues 17 to 37 (FFSTAPVIALVFFTLTAGFLV).

This sequence belongs to the PsaJ family.

It localises to the cellular thylakoid membrane. May help in the organization of the PsaE and PsaF subunits. In Acaryochloris marina (strain MBIC 11017), this protein is Photosystem I reaction center subunit IX.